A 293-amino-acid polypeptide reads, in one-letter code: tRNA pseudouridine synthase B (293 aa).

D40 (nucleophile) is an active-site residue.

It belongs to the pseudouridine synthase TruB family. Type 1 subfamily.

The enzyme catalyses uridine(55) in tRNA = pseudouridine(55) in tRNA. Responsible for synthesis of pseudouridine from uracil-55 in the psi GC loop of transfer RNAs. The polypeptide is tRNA pseudouridine synthase B (Mycolicibacterium paratuberculosis (strain ATCC BAA-968 / K-10) (Mycobacterium paratuberculosis)).